A 53-amino-acid polypeptide reads, in one-letter code: UPF0391 membrane protein Ent638_0536 (53 aa).

2 helical membrane-spanning segments follow: residues 4–24 (WGIIFLVIALIAAALGFGGLA) and 27–47 (AAWAAKLVFVVGIVLFLVSLF).

Belongs to the UPF0391 family.

Its subcellular location is the cell membrane. This is UPF0391 membrane protein Ent638_0536 from Enterobacter sp. (strain 638).